The primary structure comprises 491 residues: Cytochrome P450 81F2 (491 aa).

A helical transmembrane segment spans residues 283–303; sequence VIIKGLMLSMMLAGTDTAAVT. Cysteine 429 is a heme binding site.

This sequence belongs to the cytochrome P450 family. It depends on heme as a cofactor.

Its subcellular location is the membrane. Its pathway is secondary metabolite biosynthesis. Functionally, involved in indole glucosinolate biosynthesis. Catalyzes hydroxylation reactions of the glucosinolate indole ring. Converts indol-3-yl-methylglucosinolate (I3M) to 4-hydroxy-indol-3-yl-methylglucosinolate (4OH-I3M) and/or 1-hydroxy-indol-3-yl-methylglucosinolate (1OH-I3M) intermediates. These hydroxy intermediates are converted to 4-methoxy-indol-3-yl-methylglucosinolate (4MO-I3M) and 1-methoxy-indol-3-yl-methylglucosinolate (1MO-I3M) by indole glucosinolate methyltransferase 1 and 2 (IGMT1 and IGMT2). Contributes to defense against the green peach aphid (Myzus persicae), a generalist phloem-feeding herbivore. Required for the biosynthesis of antifungal indole glucosinolate metabolites. Required for the pathogen-induced accumulation of 4MO-I3M, which in turn is activated by the atypical BGLU26/PEN2 myrosinase. Required for the biosynthesis of Trp-derived antifungal compounds and non-host resistance to the necrotrophic fungal pathogen Plectosphaerella cucumerina. Required for resistance to the non-adapted fungal pathogen Colletotrichum gloeosporioides. The polypeptide is Cytochrome P450 81F2 (Arabidopsis thaliana (Mouse-ear cress)).